The chain runs to 291 residues: N-acetylmannosamine kinase (291 aa).

ATP is bound by residues 5 to 12 and 132 to 139; these read AIDIGGTK and GVGGGVVC. Zn(2+)-binding residues include His156, Cys166, Cys168, and Cys173.

Belongs to the ROK (NagC/XylR) family. NanK subfamily. Homodimer.

It carries out the reaction an N-acyl-D-mannosamine + ATP = an N-acyl-D-mannosamine 6-phosphate + ADP + H(+). The protein operates within amino-sugar metabolism; N-acetylneuraminate degradation; D-fructose 6-phosphate from N-acetylneuraminate: step 2/5. Its function is as follows. Catalyzes the phosphorylation of N-acetylmannosamine (ManNAc) to ManNAc-6-P. The sequence is that of N-acetylmannosamine kinase from Salmonella gallinarum (strain 287/91 / NCTC 13346).